Reading from the N-terminus, the 476-residue chain is Ribulose bisphosphate carboxylase large chain (476 aa).

The propeptide occupies 1 to 2; that stretch reads MS. Pro-3 is subject to N-acetylproline. Lys-14 carries the N6,N6,N6-trimethyllysine modification. Residues Asn-123 and Thr-173 each coordinate substrate. Lys-175 functions as the Proton acceptor in the catalytic mechanism. Lys-177 contributes to the substrate binding site. The Mg(2+) site is built by Lys-201, Asp-203, and Glu-204. An N6-carboxylysine modification is found at Lys-201. The active-site Proton acceptor is the His-294. The substrate site is built by Arg-295, His-327, and Ser-379.

The protein belongs to the RuBisCO large chain family. Type I subfamily. Heterohexadecamer of 8 large chains and 8 small chains; disulfide-linked. The disulfide link is formed within the large subunit homodimers. The cofactor is Mg(2+). Post-translationally, the disulfide bond which can form in the large chain dimeric partners within the hexadecamer appears to be associated with oxidative stress and protein turnover.

Its subcellular location is the plastid. The protein localises to the chloroplast. It catalyses the reaction 2 (2R)-3-phosphoglycerate + 2 H(+) = D-ribulose 1,5-bisphosphate + CO2 + H2O. The catalysed reaction is D-ribulose 1,5-bisphosphate + O2 = 2-phosphoglycolate + (2R)-3-phosphoglycerate + 2 H(+). RuBisCO catalyzes two reactions: the carboxylation of D-ribulose 1,5-bisphosphate, the primary event in carbon dioxide fixation, as well as the oxidative fragmentation of the pentose substrate in the photorespiration process. Both reactions occur simultaneously and in competition at the same active site. This chain is Ribulose bisphosphate carboxylase large chain, found in Setaria italica (Foxtail millet).